Here is a 37-residue protein sequence, read N- to C-terminus: EDKCSPSGAICSGFGPPEQCCSGACVPHPILRIFVCQ.

Cystine bridges form between Cys-4–Cys-21, Cys-11–Cys-25, and Cys-20–Cys-36.

Its function is as follows. Trypsin inhibitor. In Spinacia oleracea (Spinach), this protein is Trypsin inhibitor 3.